Here is a 600-residue protein sequence, read N- to C-terminus: MTAAPASPQQIRDRLLQAIDPQSNIRNMVAVLEVISSLEKYPITKEALEETRLGKLINDVRKKTKNEELAKRAKKLLRSWQKLIEPAHQHEAALRGLAGATGSANGGAHNCRPEVGAAGPPRSIHDLKSRNDLQRLPGQRLDRLGSRKRRGDQRDLGHPGPPPKVSKASHDPLVPNSSPLPTNGISGSPESFASSLDGSGHAGPEGSRLERDENDKHSGKIPVNAVRPHTSSPGLGKPPGPCLQPKASVLQQLDRVDETPGPPHPKGPPRCSFSPRNSRHEGSFARQQSLYAPKGSVPSPSPRPQALDATQVPSPLPLAQPSTPPVRRLELLPSAESPVCWLEQPESHQRLAGPGCKAGLSPAEPLLSRAGFSPDSSKADSDAASSGGSDSKKKKRYRPRDYTVNLDGQVAEAGVKPVRLKERKLTFDPMTRQIKPLTQKEPVRADSPVHMEQQSRTELDKQEAKASLQSPFEQTNWKELSRNEIIQSYLSRQSSLLSSSGAQTPGAHHFMSEYLKQEESTRQGARQLHVLVPQSPPTDLPGLTREVTQDDLDRIQASQWPGVNGCQDTQGNWYDWTQCISLDPHGDDGRLNILPYVCLD.

A TFIIS N-terminal domain is found at 10–87; it reads QIRDRLLQAI…RSWQKLIEPA (78 aa). Disordered regions lie at residues 99–330, 348–402, and 431–461; these read GATG…RRLE, HQRL…PRDY, and TRQIKPLTQKEPVRADSPVHMEQQSRTELDK. Residues 123–133 are compositionally biased toward basic and acidic residues; it reads SIHDLKSRNDL. Positions 175-197 are enriched in polar residues; it reads PNSSPLPTNGISGSPESFASSLD. Over residues 207-218 the composition is skewed to basic and acidic residues; the sequence is SRLERDENDKHS. Residues 314–324 show a composition bias toward pro residues; the sequence is SPLPLAQPSTP. Basic and acidic residues predominate over residues 441–461; the sequence is EPVRADSPVHMEQQSRTELDK. Phosphoserine is present on residues Ser-447, Ser-470, and Ser-535.

It belongs to the Mediator complex subunit 26 family. In terms of assembly, component of the Mediator complex, which is composed of MED1, MED4, MED6, MED7, MED8, MED9, MED10, MED11, MED12, MED13, MED13L, MED14, MED15, MED16, MED17, MED18, MED19, MED20, MED21, MED22, MED23, MED24, MED25, MED26, MED27, MED29, MED30, MED31, CCNC, CDK8 and CDC2L6/CDK11. The MED12, MED13, CCNC and CDK8 subunits form a distinct module termed the CDK8 module. Mediator containing the CDK8 module is less active than Mediator lacking this module in supporting transcriptional activation. Individual preparations of the Mediator complex lacking one or more distinct subunits have been variously termed ARC, CRSP, DRIP, PC2, SMCC and TRAP. Interacts with CEBPB (when not methylated).

Its subcellular location is the nucleus. Its function is as follows. Component of the Mediator complex, a coactivator involved in the regulated transcription of nearly all RNA polymerase II-dependent genes. Mediator functions as a bridge to convey information from gene-specific regulatory proteins to the basal RNA polymerase II transcription machinery. Mediator is recruited to promoters by direct interactions with regulatory proteins and serves as a scaffold for the assembly of a functional pre-initiation complex with RNA polymerase II and the general transcription factors. In Homo sapiens (Human), this protein is Mediator of RNA polymerase II transcription subunit 26 (MED26).